The sequence spans 454 residues: Tubulin beta-2 chain (454 aa).

Gln-11, Glu-69, Ser-138, Gly-142, Thr-143, Gly-144, Asn-204, and Asn-226 together coordinate GTP. Glu-69 contacts Mg(2+). The disordered stretch occupies residues 426-454 (QEASVDDEAMEDDAEAEGGAGQNEAVEEF). Residues 429–441 (SVDDEAMEDDAEA) show a composition bias toward acidic residues.

Belongs to the tubulin family. In terms of assembly, dimer of alpha and beta chains. A typical microtubule is a hollow water-filled tube with an outer diameter of 25 nm and an inner diameter of 15 nM. Alpha-beta heterodimers associate head-to-tail to form protofilaments running lengthwise along the microtubule wall with the beta-tubulin subunit facing the microtubule plus end conferring a structural polarity. Microtubules usually have 13 protofilaments but different protofilament numbers can be found in some organisms and specialized cells. Mg(2+) is required as a cofactor.

It localises to the cytoplasm. It is found in the cytoskeleton. The protein resides in the spindle. The protein localises to the nucleus. Tubulin is the major constituent of microtubules, a cylinder consisting of laterally associated linear protofilaments composed of alpha- and beta-tubulin heterodimers. Microtubules grow by the addition of GTP-tubulin dimers to the microtubule end, where a stabilizing cap forms. Below the cap, tubulin dimers are in GDP-bound state, owing to GTPase activity of alpha-tubulin. Functionally, this is the major beta tubulin of mitotic spindle. The chain is Tubulin beta-2 chain (BETC) from Physarum polycephalum (Slime mold).